The primary structure comprises 142 residues: Fusaric acid resistance protein FusB (142 aa).

The segment at 73 to 142 is disordered; sequence AAPCSRKAST…ASCSPAIRPR (70 aa). Positions 81 to 142 are enriched in low complexity; it reads STGSPARSSG…ASCSPAIRPR (62 aa).

Functionally, involved in the resistance (detoxification) of the fungal toxin fusaric acid. This Burkholderia cepacia (Pseudomonas cepacia) protein is Fusaric acid resistance protein FusB (fusB).